Reading from the N-terminus, the 476-residue chain is Nodulation protein NoeA (476 aa).

Functionally, not known; does not seem to participate in nod factor synthesis but required for nodulation on some specific Medicago species such as M.littoralis. This chain is Nodulation protein NoeA (noeA), found in Rhizobium meliloti (strain 1021) (Ensifer meliloti).